The sequence spans 413 residues: Eukaryotic initiation factor 4A-10 (413 aa).

Residues 40 to 68 (DSFDAMGLQENLLRGIYAYGFEKPSAIQQ) carry the Q motif motif. The Helicase ATP-binding domain maps to 71–241 (IVPFCKGLDV…RKFMNKPVRI (171 aa)). ATP is bound at residue 84 to 91 (AQSGTGKT). The short motif at 189–192 (DEAD) is the DEAD box element. Residues 252–413 (GIKQFYVNVD…ELPANVADLL (162 aa)) form the Helicase C-terminal domain.

The protein belongs to the DEAD box helicase family. eIF4A subfamily. EIF4F is a multi-subunit complex, the composition of which varies with external and internal environmental conditions. It is composed of at least EIF4A, EIF4E and EIF4G.

It catalyses the reaction ATP + H2O = ADP + phosphate + H(+). ATP-dependent RNA helicase which is a subunit of the eIF4F complex involved in cap recognition and is required for mRNA binding to ribosome. In the current model of translation initiation, eIF4A unwinds RNA secondary structures in the 5'-UTR of mRNAs which is necessary to allow efficient binding of the small ribosomal subunit, and subsequent scanning for the initiator codon. In Nicotiana tabacum (Common tobacco), this protein is Eukaryotic initiation factor 4A-10.